Reading from the N-terminus, the 447-residue chain is Dihydrolipoyllysine-residue acetyltransferase component of pyruvate dehydrogenase complex (447 aa).

The Lipoyl-binding domain occupies 2–78 (PINITMPALS…KVNALIAVLA (77 aa)). Lys-43 is modified (N6-lipoyllysine). The disordered stretch occupies residues 91 to 140 (GNGAAGAVPAPKPKETAETAPAAAPAPAAAPAPQAAAPASPAPADGEGKR). Residues 108-134 (ETAPAAAPAPAAAPAPQAAAPASPAPA) are compositionally biased toward low complexity. In terms of domain architecture, Peripheral subunit-binding (PSBD) spans 142–179 (FSSPLARRLAKEAGIDLSAIAGSGPHGRVVKKDVETAV). His-420 is an active-site residue.

This sequence belongs to the 2-oxoacid dehydrogenase family. In terms of assembly, forms a 24-polypeptide structural core with octahedral symmetry. (R)-lipoate serves as cofactor.

It carries out the reaction N(6)-[(R)-dihydrolipoyl]-L-lysyl-[protein] + acetyl-CoA = N(6)-[(R)-S(8)-acetyldihydrolipoyl]-L-lysyl-[protein] + CoA. The pyruvate dehydrogenase complex catalyzes the overall conversion of pyruvate to acetyl-CoA and CO(2). It contains multiple copies of three enzymatic components: pyruvate dehydrogenase (E1), dihydrolipoamide acetyltransferase (E2) and lipoamide dehydrogenase (E3). The chain is Dihydrolipoyllysine-residue acetyltransferase component of pyruvate dehydrogenase complex (pdhC) from Rhizobium meliloti (strain 1021) (Ensifer meliloti).